A 225-amino-acid chain; its full sequence is O-methyltransferase rstn1 (225 aa).

2 residues coordinate S-adenosyl-L-methionine: Q97 and H142.

It belongs to the methyltransferase superfamily.

The catalysed reaction is desmethylrestrictinol + S-adenosyl-L-methionine = restrictinol + S-adenosyl-L-homocysteine + H(+). It functions in the pathway antifungal biosynthesis. In terms of biological role, O-methyltransferase; part of the gene cluster that mediates the biosynthesis of the tetrahydropyranyl antifungal agent restricticin that acts as an inhibitor of CYP51 and blocks the ergosterol biosynthesis. Within the pathway, rstn1 uses S-adenosylmethionine to methylate position C4 of desmethylrestrictinol to produce restrictinol. The highly reducing polyketide synthase rstn3, the short chain dehydrogenase rstn4, the cyclase rstn5, the FAD-dependent monooxygenase rstn6 and the enoylreductase rstn7 are required to generate the first stable intermediate desmethylrestrictinol. Rstn3 with rstn7 biosynthesize the first polyketide chain intermediate that is reduced by rstn4, followed by epoxidation by rstn6 before 6-endo cyclization via epoxide opening by rstn5 leads to desmethylrestrictinol. The methyltransferase rstn1 then catalyzes the C4 O-methylation of desmethylrestrictinol to produce restrictinol, and the nonribosomal peptide synthetase rstn8 catalyzes the C3 esterification of restrictinol with glycine that leads to restricticin. In Aspergillus nomiae NRRL (strain ATCC 15546 / NRRL 13137 / CBS 260.88 / M93), this protein is O-methyltransferase rstn1.